Consider the following 374-residue polypeptide: Queuine tRNA-ribosyltransferase (374 aa).

The Proton acceptor role is filled by Asp-95. Substrate is bound by residues 95–99, Asp-149, Gln-191, and Gly-218; that span reads DSGGF. The tract at residues 249–255 is RNA binding; that stretch reads GVGTYRE. The active-site Nucleophile is the Asp-268. Residues 273–277 are RNA binding; important for wobble base 34 recognition; the sequence is TRWAR. The Zn(2+) site is built by Cys-306, Cys-308, Cys-311, and His-337.

The protein belongs to the queuine tRNA-ribosyltransferase family. Homodimer. Within each dimer, one monomer is responsible for RNA recognition and catalysis, while the other monomer binds to the replacement base PreQ1. It depends on Zn(2+) as a cofactor.

It catalyses the reaction 7-aminomethyl-7-carbaguanine + guanosine(34) in tRNA = 7-aminomethyl-7-carbaguanosine(34) in tRNA + guanine. Its pathway is tRNA modification; tRNA-queuosine biosynthesis. Catalyzes the base-exchange of a guanine (G) residue with the queuine precursor 7-aminomethyl-7-deazaguanine (PreQ1) at position 34 (anticodon wobble position) in tRNAs with GU(N) anticodons (tRNA-Asp, -Asn, -His and -Tyr). Catalysis occurs through a double-displacement mechanism. The nucleophile active site attacks the C1' of nucleotide 34 to detach the guanine base from the RNA, forming a covalent enzyme-RNA intermediate. The proton acceptor active site deprotonates the incoming PreQ1, allowing a nucleophilic attack on the C1' of the ribose to form the product. After dissociation, two additional enzymatic reactions on the tRNA convert PreQ1 to queuine (Q), resulting in the hypermodified nucleoside queuosine (7-(((4,5-cis-dihydroxy-2-cyclopenten-1-yl)amino)methyl)-7-deazaguanosine). The protein is Queuine tRNA-ribosyltransferase of Nostoc sp. (strain PCC 7120 / SAG 25.82 / UTEX 2576).